A 138-amino-acid polypeptide reads, in one-letter code: Phospholipase A2 homolog 1 (138 aa).

An N-terminal signal peptide occupies residues M1–G16. Cystine bridges form between C42/C132, C44/C60, C59/C111, C65/C138, C66/C104, C73/C97, and C91/C102. Residues K121 to K134 are important for membrane-damaging activities in eukaryotes and bacteria; heparin-binding.

This sequence belongs to the phospholipase A2 family. Group II subfamily. K49 sub-subfamily. In terms of assembly, homodimer; non-covalently linked (probable alternative/compact dimer conformation in solution). In terms of tissue distribution, expressed by the venom gland.

It localises to the secreted. Snake venom phospholipase A2 homolog that lacks enzymatic and anticoagulant activities. In mice, it induces conspicuous local myonecrosis, edema, and a systemic interleukin-6 response. In vitro, it is cytolytic upon myoblasts, and weakly bactericidal. A model of myotoxic mechanism has been proposed: an apo Lys49-PLA2 is activated by the entrance of a hydrophobic molecule (e.g. fatty acid) at the hydrophobic channel of the protein leading to a reorientation of a monomer. This reorientation causes a transition between 'inactive' to 'active' states, causing alignment of C-terminal and membrane-docking sites (MDoS) side-by-side and putting the membrane-disruption sites (MDiS) in the same plane, exposed to solvent and in a symmetric position for both monomers. The MDoS region stabilizes the toxin on membrane by the interaction of charged residues with phospholipid head groups. Subsequently, the MDiS region destabilizes the membrane with penetration of hydrophobic residues. This insertion causes a disorganization of the membrane, allowing an uncontrolled influx of ions (i.e. calcium and sodium), and eventually triggering irreversible intracellular alterations and cell death. In Bothrops atrox (Barba amarilla), this protein is Phospholipase A2 homolog 1.